The chain runs to 562 residues: NAD-dependent malic enzyme (562 aa).

Tyrosine 101 (proton donor) is an active-site residue. An NAD(+)-binding site is contributed by arginine 154. The active-site Proton acceptor is lysine 172. A divalent metal cation contacts are provided by glutamate 243, aspartate 244, and aspartate 267. Residues aspartate 267 and asparagine 415 each coordinate NAD(+).

The protein belongs to the malic enzymes family. As to quaternary structure, homotetramer. The cofactor is Mg(2+). Mn(2+) serves as cofactor.

The enzyme catalyses (S)-malate + NAD(+) = pyruvate + CO2 + NADH. The catalysed reaction is oxaloacetate + H(+) = pyruvate + CO2. The sequence is that of NAD-dependent malic enzyme from Shewanella frigidimarina (strain NCIMB 400).